Reading from the N-terminus, the 880-residue chain is Alanine--tRNA ligase (880 aa).

Residues His-563, His-567, Cys-665, and His-669 each coordinate Zn(2+).

Belongs to the class-II aminoacyl-tRNA synthetase family. Zn(2+) is required as a cofactor.

The protein resides in the cytoplasm. It carries out the reaction tRNA(Ala) + L-alanine + ATP = L-alanyl-tRNA(Ala) + AMP + diphosphate. In terms of biological role, catalyzes the attachment of alanine to tRNA(Ala) in a two-step reaction: alanine is first activated by ATP to form Ala-AMP and then transferred to the acceptor end of tRNA(Ala). Also edits incorrectly charged Ser-tRNA(Ala) and Gly-tRNA(Ala) via its editing domain. This is Alanine--tRNA ligase from Desulforudis audaxviator (strain MP104C).